Here is a 327-residue protein sequence, read N- to C-terminus: MEELLIENSQRFTIFPIQHPECWNWYKKLESMTWTAQEVDMCKDIDDWEAMPKPQREFYKQILAFFVVADEIVIENLLTNFMREIKVKEVLYFYTMQAAQECVHSEAYSIQVKTLIPDEKEQQRIFSGIEKHPIIKKMAQWVRQWMDPARNSLGERLVGFAAVEGILFQNHFVAIQFLKEQNIMPGLVSYNEFISRDEGMHCSFACFLISNYVYNIPEEKIIHKILKEAVELVDEFINYAFDKARGRVPGFSKEMLFQYIRYFTDNLCFMMQCKSIYNVGNPFPQMTKFFLNEVEKTNFFELRPTQYQNCVKDDAFAFKLFLDDDDF.

The Fe cation site is built by Asp-70, Glu-101, and His-104. Tyr-108 is an active-site residue. Fe cation-binding residues include Glu-164, Glu-198, and His-201.

This sequence belongs to the ribonucleoside diphosphate reductase small chain family. In terms of assembly, heterotetramer composed of a homodimer of the large subunit (R1) and a homodimer of the small subunit (R2). Larger multisubunit protein complex are also active, composed of (R1)n(R2)n. Fe cation is required as a cofactor.

It carries out the reaction a 2'-deoxyribonucleoside 5'-diphosphate + [thioredoxin]-disulfide + H2O = a ribonucleoside 5'-diphosphate + [thioredoxin]-dithiol. In terms of biological role, ribonucleoside-diphosphate reductase holoenzyme provides the precursors necessary for viral DNA synthesis. Allows virus growth in non-dividing cells. Catalyzes the biosynthesis of deoxyribonucleotides from the corresponding ribonucleotides. In African swine fever virus (isolate Tick/Malawi/Lil 20-1/1983) (ASFV), this protein is Ribonucleoside-diphosphate reductase small chain.